The sequence spans 344 residues: HTH-type transcriptional regulator MalR (344 aa).

In terms of domain architecture, HTH lacI-type spans 1–54; sequence MTTRLADIAAQAGVSEATVSRVLNGKPGVAATTRQSVLAALDVLGYERPVRLRQ. The segment at residues 5–24 is a DNA-binding region (H-T-H motif); that stretch reads LADIAAQAGVSEATVSRVLN.

Functionally, transcriptional repressor of the maltosaccharide utilization operon malEFG. The protein is HTH-type transcriptional regulator MalR (malR) of Streptomyces coelicolor (strain ATCC BAA-471 / A3(2) / M145).